The following is a 306-amino-acid chain: MVKILKTTLRATTMLKVLVKIRLSLFLTFSVLCLMPIMYMASHKTIPNEFLHNFGGKIPKSIKLETRSGLTFDVQVTKNSGRVVLQSGWASYVSAHDLKIGDFLVFKYSGDSQLKTLIFDSSGCEKVCEKPVDMSGRSYDIAMRNSQDEKKKRKQRDISRQGTVKPSEEGLKAELVPGCILPSRTDLTRLQKNILIEKVKAINSETPIYGYVMNNSSIHGIPCTVEISKKYADVYLPFEDGTVVLQHHGKSWNVRCCLTKQNSKRFLKGWRQFAGDNKLHLGDICLFDLLKDKKKYVMDVHIIRRK.

A DNA-binding region (TF-B3 1) is located at residues F29–S122. Positions Y139–P166 are disordered. The TF-B3 2 DNA-binding region spans G210–K306.

The protein resides in the nucleus. In Oryza sativa subsp. japonica (Rice), this protein is Putative B3 domain-containing protein Os03g0621600.